Reading from the N-terminus, the 202-residue chain is Glycerol-3-phosphate acyltransferase (202 aa).

4 helical membrane-spanning segments follow: residues Met1 to Leu21, Ala84 to Phe104, Ile116 to Ala136, and Ser143 to Phe163.

It belongs to the PlsY family. In terms of assembly, probably interacts with PlsX.

The protein localises to the cell inner membrane. It catalyses the reaction an acyl phosphate + sn-glycerol 3-phosphate = a 1-acyl-sn-glycero-3-phosphate + phosphate. It participates in lipid metabolism; phospholipid metabolism. Its function is as follows. Catalyzes the transfer of an acyl group from acyl-phosphate (acyl-PO(4)) to glycerol-3-phosphate (G3P) to form lysophosphatidic acid (LPA). This enzyme utilizes acyl-phosphate as fatty acyl donor, but not acyl-CoA or acyl-ACP. The chain is Glycerol-3-phosphate acyltransferase from Nitrosospira multiformis (strain ATCC 25196 / NCIMB 11849 / C 71).